We begin with the raw amino-acid sequence, 525 residues long: Alpha-ketoglutaric semialdehyde dehydrogenase 2 (525 aa).

NAD(+) contacts are provided by residues K185, E188, and G242–G247. E266 (proton acceptor) is an active-site residue. C303 (nucleophile) is an active-site residue. E394 lines the NAD(+) pocket.

This sequence belongs to the aldehyde dehydrogenase family. As to quaternary structure, homodimer.

It carries out the reaction 2,5-dioxopentanoate + NADP(+) + H2O = 2-oxoglutarate + NADPH + 2 H(+). It catalyses the reaction 2,5-dioxopentanoate + NAD(+) + H2O = 2-oxoglutarate + NADH + 2 H(+). It participates in carbohydrate acid metabolism; D-glucarate degradation. The protein operates within carbohydrate acid metabolism; galactarate degradation. Catalyzes the NAD(P)(+)-dependent oxidation of alpha-ketoglutaric semialdehyde (alphaKGSA) to alpha-ketoglutarate. Involved in D-glucarate/D-galactarate metabolism. Prefers NAD(+) to NADP(+) as a cosubstrate. This is Alpha-ketoglutaric semialdehyde dehydrogenase 2 from Azospirillum brasilense.